The primary structure comprises 342 residues: Manganese-dependent ADP-ribose/CDP-alcohol diphosphatase (342 aa).

Residue Met1 is modified to N-acetylmethionine. Zn(2+) contacts are provided by Asp25, Gln27, Asp74, Asn110, His241, His278, and His280.

The protein belongs to the ADPRibase-Mn family. As to quaternary structure, monomer. The cofactor is Mg(2+).

It carries out the reaction CDP-choline + H2O = phosphocholine + CMP + 2 H(+). The enzyme catalyses ADP-D-ribose + H2O = D-ribose 5-phosphate + AMP + 2 H(+). It catalyses the reaction CDP-glycerol + H2O = sn-glycerol 3-phosphate + CMP + 2 H(+). Functionally, hydrolyzes ADP-ribose, IDP-ribose, CDP-glycerol, CDP-choline and CDP-ethanolamine, but not other non-reducing ADP-sugars or CDP-glucose. May be involved in immune cell signaling as suggested by the second-messenger role of ADP-ribose, which activates TRPM2 as a mediator of oxidative/nitrosative stress. The sequence is that of Manganese-dependent ADP-ribose/CDP-alcohol diphosphatase (ADPRM) from Homo sapiens (Human).